We begin with the raw amino-acid sequence, 402 residues long: Plasminogen activator inhibitor 1 (402 aa).

A signal peptide spans 1–23 (MQMSPALTCLVLGLALVFGEGSA). 3 N-linked (GlcNAc...) asparagine glycosylation sites follow: N232, N288, and N352.

Belongs to the serpin family. Forms a heterodimer with TMPRSS7. Interacts with VTN. Binds LRP1B; binding is followed by internalization and degradation. Interacts with PPP1CB. In complex with PLAU/uPA, interacts with PLAUR/uPAR. Interacts with SORL1 and LRP1, either alone or in complex with PLAU; these interactions are abolished in the presence of LRPAP1/RAP. The ternary complex composed of PLAUR-PLAU-PAI1 also interacts with SORL1. Interacts with PLAT/tPA. Also interacts with SORL1, when complexed to PLAT/tPA. In terms of processing, inactivated by proteolytic attack of the urokinase-type (u-PA) and the tissue-type (TPA), cleaving the 369-Arg-|-Met-370 bond. As to expression, expressed in endothelial cells. Found in plasma, platelets, and hepatoma and fibrosarcoma cells.

It localises to the secreted. Functionally, serine protease inhibitor. Inhibits TMPRSS7. Is a primary inhibitor of tissue-type plasminogen activator (PLAT) and urokinase-type plasminogen activator (PLAU). As PLAT inhibitor, it is required for fibrinolysis down-regulation and is responsible for the controlled degradation of blood clots. As PLAU inhibitor, it is involved in the regulation of cell adhesion and spreading. Acts as a regulator of cell migration, independently of its role as protease inhibitor. It is required for stimulation of keratinocyte migration during cutaneous injury repair. It is involved in cellular and replicative senescence. Plays a role in alveolar type 2 cells senescence in the lung. Is involved in the regulation of cementogenic differentiation of periodontal ligament stem cells, and regulates odontoblast differentiation and dentin formation during odontogenesis. This is Plasminogen activator inhibitor 1 (SERPINE1) from Homo sapiens (Human).